The primary structure comprises 372 residues: N-methyl-L-tryptophan oxidase (372 aa).

An FAD-binding site is contributed by 4 to 34; sequence DLIIIGSGSVGAAAGYYATRAGLNVLMTDAH. S-8alpha-FAD cysteine is present on Cys-308.

Belongs to the MSOX/MTOX family. MTOX subfamily. Monomer. FAD serves as cofactor.

It catalyses the reaction N(alpha)-methyl-L-tryptophan + O2 + H2O = L-tryptophan + formaldehyde + H2O2. Functionally, catalyzes the oxidative demethylation of N-methyl-L-tryptophan. This is N-methyl-L-tryptophan oxidase from Escherichia coli (strain K12 / DH10B).